The following is a 240-amino-acid chain: Guanine nucleotide exchange factor sopE2 (240 aa).

The segment at 78–240 (LTSKTVKDFM…IANKYLQNAS (163 aa)) is GEF catalytic domain.

It belongs to the GEF (guanine exchange factor) SopE family.

It is found in the secreted. Functionally, activator for CDC42 by directly engaging this Rho GTPase and acting as potent guanine nucleotide exchange factor (GEF). This activation results in actin cytoskeleton rearrangements and stimulates membrane ruffling, promoting bacterial entry into non-phagocytic cells. Also activates NF-kB, p38 and ERK kinases, which are known to be involved in the induction of IL-8 expression. Chaperone InvB is required for secretion, translocation and stabilization of intracellular levels of sopE2. This is Guanine nucleotide exchange factor sopE2 (sopE2) from Salmonella typhimurium (strain LT2 / SGSC1412 / ATCC 700720).